The chain runs to 259 residues: Dihydroorotate dehydrogenase B (NAD(+)), electron transfer subunit (259 aa).

The FAD-binding FR-type domain occupies 1 to 101 (MKIEDCTVEE…MGPLGRGYDV (101 aa)). FAD contacts are provided by residues 52 to 55 (RPIS), 69 to 71 (IYR), and 76 to 77 (GT). Residues C223, C228, C231, and C245 each contribute to the [2Fe-2S] cluster site.

The protein belongs to the PyrK family. In terms of assembly, heterotetramer of 2 PyrK and 2 PyrD type B subunits. It depends on [2Fe-2S] cluster as a cofactor. FAD is required as a cofactor.

It functions in the pathway pyrimidine metabolism; UMP biosynthesis via de novo pathway; orotate from (S)-dihydroorotate (NAD(+) route): step 1/1. Responsible for channeling the electrons from the oxidation of dihydroorotate from the FMN redox center in the PyrD type B subunit to the ultimate electron acceptor NAD(+). In Fusobacterium nucleatum subsp. nucleatum (strain ATCC 25586 / DSM 15643 / BCRC 10681 / CIP 101130 / JCM 8532 / KCTC 2640 / LMG 13131 / VPI 4355), this protein is Dihydroorotate dehydrogenase B (NAD(+)), electron transfer subunit.